Here is an 803-residue protein sequence, read N- to C-terminus: Na(+)/H(+) antiporter subunit A1 (803 aa).

A run of 19 helical transmembrane segments spans residues 1–21, 30–50, 79–99, 117–137, 166–186, 208–228, 265–285, 300–320, 337–357, 377–397, 427–447, 472–492, 522–542, 591–611, 621–641, 646–666, 671–691, 707–727, and 764–784; these read MSLL…IPIL, LGWF…SLIS, LSIL…LYSI, LFMG…LYLF, LIIT…ISLA, FIFA…QVPF, LFAI…ITLF, ILAF…GIGA, FTAA…LFMI, LTIM…MAGI, LGIV…VYSI, ILML…GLFP, GITP…LLLL, LVII…SVPF, IHIY…MVVI, LFSV…FVFF, LALT…LCFY, LTNA…GLIA, and MDTL…YTMI.

The protein belongs to the CPA3 antiporters (TC 2.A.63) subunit A family. In terms of assembly, may form a heterooligomeric complex that consists of seven subunits: mnhA1, mnhB1, mnhC1, mnhD1, mnhE1, mnhF1 and mnhG1.

It localises to the cell membrane. In terms of biological role, mnh complex is a Na(+)/H(+) antiporter involved in Na(+) excretion. The chain is Na(+)/H(+) antiporter subunit A1 (mnhA1) from Staphylococcus haemolyticus (strain JCSC1435).